The chain runs to 247 residues: DNA polymerase epsilon subunit D (247 aa).

Residues 128 to 247 (KKHKADKKVP…EGQNSSDDDS (120 aa)) form a disordered region. Over residues 150–159 (RLKDNDEQII) the composition is skewed to basic and acidic residues. 3 stretches are compositionally biased toward acidic residues: residues 165-188 (ADMEDDPEAEADEDITEELANDED), 196-215 (EEEEADEELDDEKDGEEVEE), and 224-247 (EEDELRGEEAADEDEGQNSSDDDS).

As to quaternary structure, heterotetramer. Consists of four subunits: POL2, DPB2, DPB3 and DPB4.

Its subcellular location is the nucleus. Its function is as follows. As accessory component of the DNA polymerase epsilon (DNA polymerase II) participates in chromosomal DNA replication. This is DNA polymerase epsilon subunit D (DPB4) from Debaryomyces hansenii (strain ATCC 36239 / CBS 767 / BCRC 21394 / JCM 1990 / NBRC 0083 / IGC 2968) (Yeast).